The following is a 109-amino-acid chain: Putative ankyrin repeat protein L482 (109 aa).

ANK repeat units follow at residues 1–26, 27–56, 57–86, and 88–109; these read YLTEISGKGHIEIVKCLVNLGANITT, NNNYAIIQASEKGHLEVVKYLVGQNANIRS, ENNLAVRLASGNGHLEVVEYLVNLGADIRS, and NNYAIQSASQNGHLEVIEYLVA.

In Acanthamoeba polyphaga (Amoeba), this protein is Putative ankyrin repeat protein L482.